We begin with the raw amino-acid sequence, 169 residues long: Crossover junction endodeoxyribonuclease RuvC (169 aa).

Catalysis depends on residues Asp-15, Glu-75, and Asp-147. Residues Asp-15, Glu-75, and Asp-147 each coordinate Mg(2+).

Belongs to the RuvC family. As to quaternary structure, homodimer which binds Holliday junction (HJ) DNA. The HJ becomes 2-fold symmetrical on binding to RuvC with unstacked arms; it has a different conformation from HJ DNA in complex with RuvA. In the full resolvosome a probable DNA-RuvA(4)-RuvB(12)-RuvC(2) complex forms which resolves the HJ. Mg(2+) serves as cofactor.

The protein resides in the cytoplasm. It carries out the reaction Endonucleolytic cleavage at a junction such as a reciprocal single-stranded crossover between two homologous DNA duplexes (Holliday junction).. Its function is as follows. The RuvA-RuvB-RuvC complex processes Holliday junction (HJ) DNA during genetic recombination and DNA repair. Endonuclease that resolves HJ intermediates. Cleaves cruciform DNA by making single-stranded nicks across the HJ at symmetrical positions within the homologous arms, yielding a 5'-phosphate and a 3'-hydroxyl group; requires a central core of homology in the junction. The consensus cleavage sequence is 5'-(A/T)TT(C/G)-3'. Cleavage occurs on the 3'-side of the TT dinucleotide at the point of strand exchange. HJ branch migration catalyzed by RuvA-RuvB allows RuvC to scan DNA until it finds its consensus sequence, where it cleaves and resolves the cruciform DNA. In Caulobacter vibrioides (strain ATCC 19089 / CIP 103742 / CB 15) (Caulobacter crescentus), this protein is Crossover junction endodeoxyribonuclease RuvC.